A 234-amino-acid polypeptide reads, in one-letter code: Uracil-DNA glycosylase (234 aa).

Asp68 functions as the Proton acceptor in the catalytic mechanism.

This sequence belongs to the uracil-DNA glycosylase (UDG) superfamily. UNG family.

The protein resides in the cytoplasm. It carries out the reaction Hydrolyzes single-stranded DNA or mismatched double-stranded DNA and polynucleotides, releasing free uracil.. Functionally, excises uracil residues from the DNA which can arise as a result of misincorporation of dUMP residues by DNA polymerase or due to deamination of cytosine. This chain is Uracil-DNA glycosylase, found in Ruegeria sp. (strain TM1040) (Silicibacter sp.).